A 147-amino-acid polypeptide reads, in one-letter code: Large ribosomal subunit protein uL13 (147 aa).

The protein belongs to the universal ribosomal protein uL13 family. In terms of assembly, part of the 50S ribosomal subunit.

This protein is one of the early assembly proteins of the 50S ribosomal subunit, although it is not seen to bind rRNA by itself. It is important during the early stages of 50S assembly. This chain is Large ribosomal subunit protein uL13, found in Latilactobacillus sakei subsp. sakei (strain 23K) (Lactobacillus sakei subsp. sakei).